The primary structure comprises 146 residues: VHFSDAERDAIAAIWGKIHIDEIGPQSLARVLIVYPWTQRYFSKFGDMSSVAAISGNPKVAAHGKVVLGALEKGVKNLDNVKATYSNLSQLHCEKLNVDPDNFRALGDCITIVVASKFGNAFTPELQNAWHKFLSVVAAALSSRYF.

The region spanning His2–Phe146 is the Globin domain. Heme b contacts are provided by His63 and His92.

Belongs to the globin family. Heterotetramer of two alpha chains and two beta chains. As to expression, red blood cells.

Its function is as follows. Involved in oxygen transport from gills to the various peripheral tissues. The chain is Hemoglobin cathodic subunit beta (hbb) from Hoplosternum littorale (Hassar).